The sequence spans 262 residues: uncharacterized protein (262 aa).

This is an uncharacterized protein from Bacillus subtilis (strain 168).